We begin with the raw amino-acid sequence, 496 residues long: Solute carrier family 2, facilitated glucose transporter member 11 (496 aa).

Topologically, residues 1–11 are cytoplasmic; it reads MRALRRLIQGR. A helical transmembrane segment spans residues 12-32; sequence ILLLTICAAGIGGTFQFGYNL. The Extracellular portion of the chain corresponds to 33–61; sequence SIINAPTLHIQEFTNETWQARTGEPLPDH. Asn-47 is a glycosylation site (N-linked (GlcNAc...) asparagine). The helical transmembrane segment at 62–82 threads the bilayer; sequence LVLLMWSLIVSLYPLGGLFGA. Residues 83-97 are Cytoplasmic-facing; sequence LLAGPLAITLGRKKS. A helical membrane pass occupies residues 98–118; that stretch reads LLVNNIFVVSAAILFGFSRKA. Over 119 to 128 the chain is Extracellular; the sequence is GSFEMIMLGR. Residues 129-149 traverse the membrane as a helical segment; it reads LLVGVNAGVSMNIQPMYLGES. Over 150 to 157 the chain is Cytoplasmic; sequence APKELRGA. The helical transmembrane segment at 158 to 178 threads the bilayer; that stretch reads VAMSSAIFTALGIVMGQVVGL. Residues 179-187 are Extracellular-facing; sequence RELLGGPQA. Residues 188 to 208 form a helical membrane-spanning segment; it reads WPLLLASCLVPGALQLASLPL. Residues 209–273 lie on the Cytoplasmic side of the membrane; sequence LPESPRYLLI…LFQHRALRRQ (65 aa). The helical transmembrane segment at 274 to 294 threads the bilayer; the sequence is VTSLVVLGSAMELCGNDSVYA. At 295–311 the chain is on the extracellular side; it reads YASSVFRKAGVPEAKIQ. Residues 312–332 traverse the membrane as a helical segment; it reads YAIIGTGSCELLTAVVSCVVI. Over 333–338 the chain is Cytoplasmic; that stretch reads ERVGRR. The helical transmembrane segment at 339 to 359 threads the bilayer; that stretch reads VLLIGGYSLMTCWGSIFTVAL. The Extracellular segment spans residues 360-364; that stretch reads CLQSS. A helical membrane pass occupies residues 365 to 385; sequence FPWTLYLAMACIFAFILSFGI. Topologically, residues 386 to 408 are cytoplasmic; it reads GPAGVTGILATELFDQMARPAAC. Residues 409-429 traverse the membrane as a helical segment; sequence MVCGALMWIMLILVGLGFPFI. Residues 430–435 lie on the Extracellular side of the membrane; sequence MEALSH. Residues 436–456 form a helical membrane-spanning segment; it reads FLYVPFLGVCVCGAIYTGLFL. The Cytoplasmic segment spans residues 457–496; sequence PETKGKTFQEISKELHRLNFPRRAQGPTWRSLEVIQSTEL.

Belongs to the major facilitator superfamily. Sugar transporter (TC 2.A.1.1) family. Glucose transporter subfamily. As to expression, expressed in heart and skeletal muscle.

Its subcellular location is the cell membrane. The enzyme catalyses D-glucose(out) = D-glucose(in). Functionally, facilitative glucose transporter. The protein is Solute carrier family 2, facilitated glucose transporter member 11 of Homo sapiens (Human).